We begin with the raw amino-acid sequence, 1954 residues long: Protein abnormal spindle (1954 aa).

The tract at residues 134 to 155 (VKNPRKFPTVGKTLQLKSPTGA) is disordered. Phosphoserine is present on residues serine 151 and serine 360. The residue at position 364 (threonine 364) is a Phosphothreonine. 10 positions are modified to phosphoserine: serine 388, serine 390, serine 395, serine 398, serine 491, serine 495, serine 497, serine 501, serine 504, and serine 514. The tract at residues 476–548 (KSVKGSPVKN…SSSAHAWPHA (73 aa)) is disordered. The segment covering 498–507 (DAPSNESLYR) has biased composition (polar residues). The segment covering 528-548 (RSAAPANASARSSSAHAWPHA) has biased composition (low complexity). The Calponin-homology (CH) domain occupies 836-968 (KETKDILLRF…LLWQLIYKFR (133 aa)). IQ domains lie at 1004–1033 (RHRA…ERTQ), 1386–1415 (TQAA…QLRQ), and 1467–1496 (QREA…KQRQ). Residues 1614–1641 (RANRSMKQARQEFVQLRTIAVHLQQKFR) adopt a coiled-coil conformation. IQ domains are found at residues 1656–1687 (LRCS…MMDL) and 1690–1721 (QKRA…IRKR).

Its subcellular location is the cytoplasm. It is found in the nucleus. It localises to the cytoskeleton. The protein localises to the spindle. The protein resides in the microtubule organizing center. Its subcellular location is the perinuclear region. Functionally, required to maintain the structure of the centrosomal microtubule organizing center (MTOC) during mitosis. May have a preferential role in regulating neurogenesis. Required for germ cell mitosis and oocyte differentiation. The sequence is that of Protein abnormal spindle from Drosophila melanogaster (Fruit fly).